A 307-amino-acid polypeptide reads, in one-letter code: GTPase Era (307 aa).

Residues 17–186 (RCGFVAIVGR…LELLKPYLPE (170 aa)) form the Era-type G domain. The G1 stretch occupies residues 25–32 (GRPNVGKS). 25–32 (GRPNVGKS) provides a ligand contact to GTP. The segment at 51 to 55 (QTTRN) is G2. The G3 stretch occupies residues 72 to 75 (DTPG). GTP contacts are provided by residues 72–76 (DTPGF) and 133–136 (NKID). The interval 133 to 136 (NKID) is G4. Positions 165 to 167 (VSA) are G5. The region spanning 217 to 293 (LGEELPYAMN…FLKVWVKVKS (77 aa)) is the KH type-2 domain.

Belongs to the TRAFAC class TrmE-Era-EngA-EngB-Septin-like GTPase superfamily. Era GTPase family. Monomer.

It is found in the cytoplasm. It localises to the cell inner membrane. An essential GTPase that binds both GDP and GTP, with rapid nucleotide exchange. Plays a role in 16S rRNA processing and 30S ribosomal subunit biogenesis and possibly also in cell cycle regulation and energy metabolism. The polypeptide is GTPase Era (Neisseria meningitidis serogroup C / serotype 2a (strain ATCC 700532 / DSM 15464 / FAM18)).